A 184-amino-acid polypeptide reads, in one-letter code: Holliday junction branch migration complex subunit RuvA (184 aa).

The tract at residues 1-64 is domain I; it reads MIRAIEGIIT…EDANLLYGFL (64 aa). A domain II region spans residues 65–144; the sequence is DTNEQKMFEM…SDESVPGYQN (80 aa). Asparagine 144 is a region of interest (flexible linker). The segment at 144–184 is domain III; the sequence is NEALLALEALGFKREKIVKILPDLKSTSTSELVKEALKKLA.

This sequence belongs to the RuvA family. Homotetramer. Forms an RuvA(8)-RuvB(12)-Holliday junction (HJ) complex. HJ DNA is sandwiched between 2 RuvA tetramers; dsDNA enters through RuvA and exits via RuvB. An RuvB hexamer assembles on each DNA strand where it exits the tetramer. Each RuvB hexamer is contacted by two RuvA subunits (via domain III) on 2 adjacent RuvB subunits; this complex drives branch migration. In the full resolvosome a probable DNA-RuvA(4)-RuvB(12)-RuvC(2) complex forms which resolves the HJ.

The protein localises to the cytoplasm. The RuvA-RuvB-RuvC complex processes Holliday junction (HJ) DNA during genetic recombination and DNA repair, while the RuvA-RuvB complex plays an important role in the rescue of blocked DNA replication forks via replication fork reversal (RFR). RuvA specifically binds to HJ cruciform DNA, conferring on it an open structure. The RuvB hexamer acts as an ATP-dependent pump, pulling dsDNA into and through the RuvAB complex. HJ branch migration allows RuvC to scan DNA until it finds its consensus sequence, where it cleaves and resolves the cruciform DNA. This Campylobacter curvus (strain 525.92) protein is Holliday junction branch migration complex subunit RuvA.